Reading from the N-terminus, the 272-residue chain is Putative hydro-lyase RPB_3621 (272 aa).

Belongs to the D-glutamate cyclase family.

This Rhodopseudomonas palustris (strain HaA2) protein is Putative hydro-lyase RPB_3621.